Consider the following 931-residue polypeptide: Envelope glycoprotein B (931 aa).

Positions 1–71 (MSPCGYYSKW…FSMFVTAVVS (71 aa)) are cleaved as a signal peptide. Residues 72–786 (VSPSSFYESL…HGFTTFLSNP (715 aa)) lie on the Virion surface side of the membrane. Intrachain disulfides connect C122-C584, C139-C540, C213-C277, C369-C417, and C608-C645. A glycan (N-linked (GlcNAc...) asparagine; by host) is linked at N147. The segment at 179–185 (AWAGSSY) is involved in fusion and/or binding to host membrane. N257 carries an N-linked (GlcNAc...) asparagine; by host glycan. The interval 264–271 (GTPGTYRT) is involved in fusion and/or binding to host membrane. N435, N503, N620, and N686 each carry an N-linked (GlcNAc...) asparagine; by host glycan. Hydrophobic membrane proximal region regions lie at residues 731 to 784 (IDKV…TFLS) and 764 to 784 (VVLGATGALLSTVHGFTTFLS). The helical transmembrane segment at 787–807 (FGALAVGLLVLAGLVAAFFAY) threads the bilayer. The Intravirion portion of the chain corresponds to 808-931 (RYVLKLKTSP…RVRTENVTGV (124 aa)). The Golgi targeting signature appears at 881-884 (YMTL). Residues 920 to 923 (YSRV) carry the Internalization motif motif.

It belongs to the herpesviridae glycoprotein B family. Homotrimer; disulfide-linked. Binds to heparan sulfate proteoglycans. Interacts with gH/gL heterodimer. In terms of processing, a proteolytic cleavage by host furin generates two subunits that remain linked by disulfide bonds.

It is found in the virion membrane. The protein resides in the host cell membrane. It localises to the host endosome membrane. Its subcellular location is the host Golgi apparatus membrane. Envelope glycoprotein that forms spikes at the surface of virion envelope. Essential for the initial attachment to heparan sulfate moieties of the host cell surface proteoglycans. Involved in fusion of viral and cellular membranes leading to virus entry into the host cell. Following initial binding to its host receptors, membrane fusion is mediated by the fusion machinery composed at least of gB and the heterodimer gH/gL. May be involved in the fusion between the virion envelope and the outer nuclear membrane during virion egress. This Varicella-zoster virus (strain Oka vaccine) (HHV-3) protein is Envelope glycoprotein B.